We begin with the raw amino-acid sequence, 108 residues long: Small ribosomal subunit protein mS33 (108 aa).

The disordered stretch occupies residues 84–108 (LRARDKGAPKKKRTAPSAADAKKKK).

This sequence belongs to the mitochondrion-specific ribosomal protein mS33 family. Component of the mitochondrial small ribosomal subunit (mt-SSU). Mature N.crassa 74S mitochondrial ribosomes consist of a small (37S) and a large (54S) subunit. The 37S small subunit contains a 16S ribosomal RNA (16S mt-rRNA) and 32 different proteins. The 54S large subunit contains a 23S rRNA (23S mt-rRNA) and 42 different proteins.

The protein resides in the mitochondrion. Component of the mitochondrial ribosome (mitoribosome), a dedicated translation machinery responsible for the synthesis of mitochondrial genome-encoded proteins, including at least some of the essential transmembrane subunits of the mitochondrial respiratory chain. The mitoribosomes are attached to the mitochondrial inner membrane and translation products are cotranslationally integrated into the membrane. In Neurospora crassa (strain ATCC 24698 / 74-OR23-1A / CBS 708.71 / DSM 1257 / FGSC 987), this protein is Small ribosomal subunit protein mS33 (rsm27).